A 199-amino-acid chain; its full sequence is Shikimate kinase (199 aa).

Gly-32–Ser-37 contributes to the ATP binding site. Mg(2+) is bound at residue Thr-36. Asp-54, Arg-78, and Gly-100 together coordinate substrate. Arg-138 lines the ATP pocket. Arg-157 contributes to the substrate binding site.

Belongs to the shikimate kinase family. As to quaternary structure, monomer. Mg(2+) is required as a cofactor.

It localises to the cytoplasm. The enzyme catalyses shikimate + ATP = 3-phosphoshikimate + ADP + H(+). The protein operates within metabolic intermediate biosynthesis; chorismate biosynthesis; chorismate from D-erythrose 4-phosphate and phosphoenolpyruvate: step 5/7. Catalyzes the specific phosphorylation of the 3-hydroxyl group of shikimic acid using ATP as a cosubstrate. The polypeptide is Shikimate kinase (Synechococcus sp. (strain CC9605)).